A 295-amino-acid chain; its full sequence is GTPase Era (295 aa).

Residues 3-170 enclose the Era-type G domain; that stretch reads KSGFVTIVGR…VDLMKTELPE (168 aa). Residues 11-18 form a G1 region; it reads GRPNVGKS. 11-18 provides a ligand contact to GTP; it reads GRPNVGKS. The G2 stretch occupies residues 37-41; that stretch reads QTTRN. Residues 58–61 form a G3 region; the sequence is DTPG. GTP-binding positions include 58-62 and 120-123; these read DTPGI and NKID. The tract at residues 120–123 is G4; it reads NKID. The G5 stretch occupies residues 149-151; that stretch reads IAA. In terms of domain architecture, KH type-2 spans 201-278; the sequence is LRDEVPHGIA…NVKIWVKVRK (78 aa).

This sequence belongs to the TRAFAC class TrmE-Era-EngA-EngB-Septin-like GTPase superfamily. Era GTPase family. In terms of assembly, monomer.

The protein localises to the cytoplasm. It localises to the cell membrane. Functionally, an essential GTPase that binds both GDP and GTP, with rapid nucleotide exchange. Plays a role in 16S rRNA processing and 30S ribosomal subunit biogenesis and possibly also in cell cycle regulation and energy metabolism. The chain is GTPase Era from Clostridium botulinum (strain Alaska E43 / Type E3).